Here is a 726-residue protein sequence, read N- to C-terminus: Catalase-peroxidase (726 aa).

A cross-link (tryptophyl-tyrosyl-methioninium (Trp-Tyr) (with M-234)) is located at residues 85 to 208; the sequence is WHSAGSYRIH…FAATEMGLIY (124 aa). Catalysis depends on His86, which acts as the Proton acceptor. Residues 208-234 constitute a cross-link (tryptophyl-tyrosyl-methioninium (Tyr-Met) (with W-85)); sequence YVNPEGPMGNPDPSGSAKEIRLAFTRM. A heme b-binding site is contributed by His249.

The protein belongs to the peroxidase family. Peroxidase/catalase subfamily. In terms of assembly, homodimer or homotetramer. It depends on heme b as a cofactor. In terms of processing, formation of the three residue Trp-Tyr-Met cross-link is important for the catalase, but not the peroxidase activity of the enzyme.

It catalyses the reaction H2O2 + AH2 = A + 2 H2O. The enzyme catalyses 2 H2O2 = O2 + 2 H2O. Its function is as follows. Bifunctional enzyme with both catalase and broad-spectrum peroxidase activity. In Pseudothermotoga lettingae (strain ATCC BAA-301 / DSM 14385 / NBRC 107922 / TMO) (Thermotoga lettingae), this protein is Catalase-peroxidase.